A 256-amino-acid polypeptide reads, in one-letter code: Ras-related protein Rab-26 (256 aa).

Residues 1–53 are disordered; that stretch reads MSRKKTPKSKAGSAPATSALPAANGPRPVRPGTARPGPEAPPNGPPQPGRSSV. Positions 38-48 are enriched in pro residues; the sequence is PEAPPNGPPQP. Residues S72, G73, V74, G75, K76, T77, C78, S95, and T96 each contribute to the GTP site. Position 77 (T77) interacts with Mg(2+). Short sequence motifs (switch) lie at residues 86-101 and 119-136; these read GAFL…GIDF and DTAG…YYRD. T96 and D119 together coordinate Mg(2+). 6 residues coordinate GTP: G122, N177, K178, D180, A208, and K209. 2 S-geranylgeranyl cysteine lipidation sites follow: C253 and C254.

This sequence belongs to the small GTPase superfamily. Rab family. Mg(2+) serves as cofactor.

It localises to the cell membrane. The enzyme catalyses GTP + H2O = GDP + phosphate + H(+). Its activity is regulated as follows. Regulated by guanine nucleotide exchange factors (GEFs) which promote the exchange of bound GDP for free GTP. Regulated by GTPase activating proteins (GAPs) which increase the GTP hydrolysis activity. Inhibited by GDP dissociation inhibitors (GDIs). Functionally, the small GTPases Rab are key regulators of intracellular membrane trafficking, from the formation of transport vesicles to their fusion with membranes. Rabs cycle between an inactive GDP-bound form and an active GTP-bound form that is able to recruit to membranes different set of downstream effectors directly responsible for vesicle formation, movement, tethering and fusion. RAB26 mediates transport of ADRA2A and ADRA2B from the Golgi to the cell membrane. Plays a role in the maturation of zymogenic granules and in pepsinogen secretion in the stomach. Plays a role in the secretion of amylase from acinar granules in the parotid gland. This chain is Ras-related protein Rab-26 (RAB26), found in Bos taurus (Bovine).